The following is a 233-amino-acid chain: 7-cyano-7-deazaguanine synthase (233 aa).

17–27 contacts ATP; the sequence is LSGGLDSMVCA. Zn(2+)-binding residues include Cys196, Cys206, Cys209, and Cys212.

The protein belongs to the QueC family. Zn(2+) serves as cofactor.

It carries out the reaction 7-carboxy-7-deazaguanine + NH4(+) + ATP = 7-cyano-7-deazaguanine + ADP + phosphate + H2O + H(+). Its pathway is purine metabolism; 7-cyano-7-deazaguanine biosynthesis. Functionally, catalyzes the ATP-dependent conversion of 7-carboxy-7-deazaguanine (CDG) to 7-cyano-7-deazaguanine (preQ(0)). The polypeptide is 7-cyano-7-deazaguanine synthase (Novosphingobium aromaticivorans (strain ATCC 700278 / DSM 12444 / CCUG 56034 / CIP 105152 / NBRC 16084 / F199)).